A 244-amino-acid chain; its full sequence is Krueppel-like factor 9 (244 aa).

Residues 80-142 (SVCSDSLESP…AKGKHASEKR (63 aa)) are disordered. S122 is subject to Phosphoserine. 3 C2H2-type zinc fingers span residues 143-167 (HKCPYSGCGKVYGKSSHLKAHYRVH), 173-197 (FPCTWPDCLKKFSRSDELTRHYRTH), and 203-225 (FRCPLCEKRFMRSDHLTKHARRH).

The protein belongs to the Sp1 C2H2-type zinc-finger protein family. Interacts with ZZEF1. In terms of tissue distribution, epidermis (at protein level).

The protein localises to the nucleus. Transcription factor that binds to GC box promoter elements. Selectively activates mRNA synthesis from genes containing tandem repeats of GC boxes but represses genes with a single GC box. Acts as an epidermal circadian transcription factor regulating keratinocyte proliferation. This Homo sapiens (Human) protein is Krueppel-like factor 9 (KLF9).